The chain runs to 750 residues: 5-methyltetrahydropteroyltriglutamate--homocysteine methyltransferase (750 aa).

5-methyltetrahydropteroyltri-L-glutamate is bound by residues 15–18 and K114; that span reads RELK. L-homocysteine-binding positions include 425–427 and E478; that span reads IGS. Residues 425 to 427 and E478 contribute to the L-methionine site; that span reads IGS. W555 serves as a coordination point for 5-methyltetrahydropteroyltri-L-glutamate. An L-homocysteine-binding site is contributed by D593. Residue D593 coordinates L-methionine. E599 is a binding site for 5-methyltetrahydropteroyltri-L-glutamate. H636, C638, and E660 together coordinate Zn(2+). H689 functions as the Proton donor in the catalytic mechanism. Position 721 (C721) interacts with Zn(2+).

This sequence belongs to the vitamin-B12 independent methionine synthase family. Requires Zn(2+) as cofactor.

It carries out the reaction 5-methyltetrahydropteroyltri-L-glutamate + L-homocysteine = tetrahydropteroyltri-L-glutamate + L-methionine. It functions in the pathway amino-acid biosynthesis; L-methionine biosynthesis via de novo pathway; L-methionine from L-homocysteine (MetE route): step 1/1. In terms of biological role, catalyzes the transfer of a methyl group from 5-methyltetrahydrofolate to homocysteine resulting in methionine formation. This is 5-methyltetrahydropteroyltriglutamate--homocysteine methyltransferase from Streptococcus sanguinis (strain SK36).